Reading from the N-terminus, the 296-residue chain is Nucleotide-binding protein stu0831 (296 aa).

Residue 13–20 coordinates ATP; the sequence is GMSGAGKT. Residue 63-66 participates in GTP binding; it reads DMRS.

Belongs to the RapZ-like family.

Displays ATPase and GTPase activities. The chain is Nucleotide-binding protein stu0831 from Streptococcus thermophilus (strain ATCC BAA-250 / LMG 18311).